A 480-amino-acid chain; its full sequence is Glycogen synthase (480 aa).

Residue Lys15 participates in ADP-alpha-D-glucose binding.

It belongs to the glycosyltransferase 1 family. Bacterial/plant glycogen synthase subfamily.

It carries out the reaction [(1-&gt;4)-alpha-D-glucosyl](n) + ADP-alpha-D-glucose = [(1-&gt;4)-alpha-D-glucosyl](n+1) + ADP + H(+). It participates in glycan biosynthesis; glycogen biosynthesis. Synthesizes alpha-1,4-glucan chains using ADP-glucose. The protein is Glycogen synthase of Rhizobium johnstonii (strain DSM 114642 / LMG 32736 / 3841) (Rhizobium leguminosarum bv. viciae).